A 428-amino-acid chain; its full sequence is Aerobic C4-dicarboxylate transport protein (428 aa).

9 helical membrane passes run 5-27, 47-64, 77-99, 141-163, 184-206, 216-238, 289-311, 326-348, and 353-375; these read LFKS…GHYY, MIIA…IAGM, ALLY…VNVV, VIGA…FGFA, VIFG…AMAF, LVQL…VVVL, VVGL…YLTM, IFHQ…GVTG, and VLAA…ILGI.

Belongs to the dicarboxylate/amino acid:cation symporter (DAACS) (TC 2.A.23) family.

The protein localises to the cell inner membrane. In terms of biological role, responsible for the transport of dicarboxylates such as succinate, fumarate, and malate from the periplasm across the inner membrane. The sequence is that of Aerobic C4-dicarboxylate transport protein (dctA) from Salmonella typhimurium (strain LT2 / SGSC1412 / ATCC 700720).